Here is a 55-residue protein sequence, read N- to C-terminus: Large ribosomal subunit protein bL33C (55 aa).

It belongs to the bacterial ribosomal protein bL33 family.

The sequence is that of Large ribosomal subunit protein bL33C from Kineococcus radiotolerans (strain ATCC BAA-149 / DSM 14245 / SRS30216).